We begin with the raw amino-acid sequence, 362 residues long: sn-glycerol-3-phosphate import ATP-binding protein UgpC (362 aa).

The ABC transporter domain occupies 4–235 (LSFRNVKKTY…PASTFVAGFI (232 aa)). 37–44 (GPSGCGKS) serves as a coordination point for ATP.

The protein belongs to the ABC transporter superfamily. sn-glycerol-3-phosphate importer (TC 3.A.1.1.3) family. As to quaternary structure, the complex is composed of two ATP-binding proteins (UgpC), two transmembrane proteins (UgpA and UgpE) and a solute-binding protein (UgpB).

It is found in the cell inner membrane. It catalyses the reaction sn-glycerol 3-phosphate(out) + ATP + H2O = sn-glycerol 3-phosphate(in) + ADP + phosphate + H(+). In terms of biological role, part of the ABC transporter complex UgpBAEC involved in sn-glycerol-3-phosphate (G3P) import. Responsible for energy coupling to the transport system. This Bordetella bronchiseptica (strain ATCC BAA-588 / NCTC 13252 / RB50) (Alcaligenes bronchisepticus) protein is sn-glycerol-3-phosphate import ATP-binding protein UgpC.